The chain runs to 250 residues: Probable transcriptional regulatory protein Cag_0165 (250 aa).

Belongs to the TACO1 family.

The protein resides in the cytoplasm. The polypeptide is Probable transcriptional regulatory protein Cag_0165 (Chlorobium chlorochromatii (strain CaD3)).